We begin with the raw amino-acid sequence, 147 residues long: D-aminoacyl-tRNA deacylase (147 aa).

The Gly-cisPro motif, important for rejection of L-amino acids signature appears at 136–137 (GP).

It belongs to the DTD family. As to quaternary structure, homodimer.

It is found in the cytoplasm. The enzyme catalyses glycyl-tRNA(Ala) + H2O = tRNA(Ala) + glycine + H(+). It catalyses the reaction a D-aminoacyl-tRNA + H2O = a tRNA + a D-alpha-amino acid + H(+). An aminoacyl-tRNA editing enzyme that deacylates mischarged D-aminoacyl-tRNAs. Also deacylates mischarged glycyl-tRNA(Ala), protecting cells against glycine mischarging by AlaRS. Acts via tRNA-based rather than protein-based catalysis; rejects L-amino acids rather than detecting D-amino acids in the active site. By recycling D-aminoacyl-tRNA to D-amino acids and free tRNA molecules, this enzyme counteracts the toxicity associated with the formation of D-aminoacyl-tRNA entities in vivo and helps enforce protein L-homochirality. This chain is D-aminoacyl-tRNA deacylase, found in Persephonella marina (strain DSM 14350 / EX-H1).